Reading from the N-terminus, the 140-residue chain is Ribonuclease P protein component (140 aa).

This sequence belongs to the RnpA family. In terms of assembly, consists of a catalytic RNA component (M1 or rnpB) and a protein subunit.

The catalysed reaction is Endonucleolytic cleavage of RNA, removing 5'-extranucleotides from tRNA precursor.. In terms of biological role, RNaseP catalyzes the removal of the 5'-leader sequence from pre-tRNA to produce the mature 5'-terminus. It can also cleave other RNA substrates such as 4.5S RNA. The protein component plays an auxiliary but essential role in vivo by binding to the 5'-leader sequence and broadening the substrate specificity of the ribozyme. This is Ribonuclease P protein component from Nostoc sp. (strain PCC 7120 / SAG 25.82 / UTEX 2576).